Reading from the N-terminus, the 1232-residue chain is Anion exchange protein 3 (1232 aa).

Over residues 1 to 11 (MANGVIPPPGG) the composition is skewed to pro residues. Disordered stretches follow at residues 1-316 (MANG…KLDR) and 429-498 (NDDK…GDGH). Topologically, residues 1–708 (MANGVIPPPG…DLRDALHSQC (708 aa)) are cytoplasmic. Positions 58–75 (DPEKPSRSYSERDFEFHR) are enriched in basic and acidic residues. Basic residues-rich tracts occupy residues 76-97 (HTSH…KLRR) and 104-113 (RHTRRKRKKE). The segment covering 134–152 (VEEEEEEEEEEEGESEAEP) has biased composition (acidic residues). A phosphoserine mark is found at serine 167, serine 170, serine 175, and serine 198. The span at 200–214 (QHSSSSPSPRAQASR) shows a compositional bias: low complexity. A compositionally biased stretch (basic and acidic residues) spans 267–279 (DDMKSHRLEDNPG). Residues 280 to 289 (VRRHLVKKPS) are compositionally biased toward basic residues. Arginine 295 is subject to Omega-N-methylarginine. A compositionally biased stretch (basic residues) spans 305 to 316 (LRRKKKKKKLDR). The segment covering 440–450 (NPSSSSMNSVL) has biased composition (polar residues). A compositionally biased stretch (basic and acidic residues) spans 481–498 (HDPDAKEKPLHMPGGDGH). 5 helical membrane passes run 709-731 (VAAV…GLLG), 737-774 (LMGV…LLVF), 794-816 (VWVG…SFLV), 826-847 (IFAF…YKVF), and 893-910 (ALLS…AFFL). The tract at residues 709–1232 (VAAVLFIYFA…DEYNELHMPV (524 aa)) is membrane (anion exchange). Residues 911 to 925 (RKFRNSRFLGGKARR) are Cytoplasmic-facing. The next 5 helical transmembrane spans lie at 926–946 (IIGD…DYSI), 980–1002 (PFPP…LIFM), 1028–1049 (LLLI…LTAA), 1083–1128 (VTGV…IQLS), and 1155–1191 (MHLF…TVPL). The S-palmitoyl cysteine moiety is linked to residue cysteine 1165.

The protein belongs to the anion exchanger (TC 2.A.31) family.

The protein resides in the cell membrane. The enzyme catalyses hydrogencarbonate(in) + chloride(out) = hydrogencarbonate(out) + chloride(in). Sodium-independent anion exchanger which mediates the electroneutral exchange of chloride for bicarbonate ions across the cell membrane. May be involved in the regulation of intracellular pH, and the modulation of cardiac action potential. This is Anion exchange protein 3 (SLC4A3) from Pongo abelii (Sumatran orangutan).